The primary structure comprises 421 residues: Outer capsid protein P8 (421 aa).

It belongs to the phytoreovirus outer capsid protein P8 family. Homotrimer. Homomultimer. Interacts with host peroxisomal glycolate oxidase (GOX). This interaction mediates its relocation to virus factories peripheral to host peroxisomes.

It is found in the virion. It localises to the host cytoplasm. In terms of biological role, capsid protein which self-assembles to form the outer icosahedral capsid with a T=13 symmetry, about 70 nm in diameter and consisting of 780 molecules capsid proteins. The polypeptide is Outer capsid protein P8 (S8) (Rice dwarf virus (isolate S) (RDV)).